Here is a 154-residue protein sequence, read N- to C-terminus: Transmembrane protein 35B (154 aa).

Residues 1–22 (MALLLSVLRVLLGGFFALVGLA) form the signal peptide. Helical transmembrane passes span 63–83 (IAVG…PPML), 85–105 (EISN…LAAL), and 112–132 (CIPA…QLLA).

Belongs to the DoxX family.

Its subcellular location is the membrane. The chain is Transmembrane protein 35B from Homo sapiens (Human).